Here is a 514-residue protein sequence, read N- to C-terminus: Serine/threonine protein phosphatase PstP (514 aa).

The Cytoplasmic portion of the chain corresponds to 1–302; the sequence is MARVTLVLRY…RPRWSGRRLA (302 aa). The region spanning 9–238 is the PPM-type phosphatase domain; it reads RYAARSDRGL…DNVTVVVADV (230 aa). Mn(2+) is bound by residues D38, G39, D118, S160, D191, and D229. A helical transmembrane segment spans residues 303 to 323; the sequence is FVVALVTVLMTAGLLIGRAII. Residues 324–514 are Extracellular-facing; it reads RSNYYVADYA…QPGIDCRAAA (191 aa). The tract at residues 420 to 514 is disordered; it reads LLPPCPAPRA…QPGIDCRAAA (95 aa). A compositionally biased stretch (low complexity) spans 440 to 480; the sequence is TTSETTEPNVTSSPASPSPTTSASAPTGTTPAIPTSASPAA.

It depends on Mn(2+) as a cofactor.

The protein resides in the cell membrane. It carries out the reaction O-phospho-L-seryl-[protein] + H2O = L-seryl-[protein] + phosphate. The catalysed reaction is O-phospho-L-threonyl-[protein] + H2O = L-threonyl-[protein] + phosphate. Its function is as follows. Plays an important role in regulating cell division and growth by reversible phosphorylation signaling. May play important roles in regulating cellular metabolism and signaling pathways, which could mediate the growth and development of the cell. Plays a role in establishing and maintaining infection. The chain is Serine/threonine protein phosphatase PstP (pstP) from Mycobacterium tuberculosis (strain CDC 1551 / Oshkosh).